Consider the following 148-residue polypeptide: Large ribosomal subunit protein uL13 (148 aa).

Basic and acidic residues-rich tracts occupy residues 71-81 and 89-99; these read GKKEKQKEYHE and DHSHSPEEMRA. 2 disordered regions span residues 71–99 and 125–148; these read GKKE…EMRA and KKLK…LDNA.

It belongs to the universal ribosomal protein uL13 family. In terms of assembly, part of the 50S ribosomal subunit.

Its function is as follows. This protein is one of the early assembly proteins of the 50S ribosomal subunit, although it is not seen to bind rRNA by itself. It is important during the early stages of 50S assembly. The sequence is that of Large ribosomal subunit protein uL13 from Salinibacter ruber (strain DSM 13855 / M31).